Consider the following 29-residue polypeptide: Glucagon (29 aa).

Residue S2 is modified to Phosphoserine.

This sequence belongs to the glucagon family.

It is found in the secreted. In terms of biological role, glucagon plays a key role in glucose metabolism and homeostasis. Regulates blood glucose by increasing gluconeogenesis and decreasing glycolysis. The protein is Glucagon (GCG) of Oryctolagus cuniculus (Rabbit).